A 290-amino-acid polypeptide reads, in one-letter code: Inositol monophosphatase 2 (290 aa).

The Mg(2+) site is built by Glu-83, Asp-103, Ile-105, and Asp-106. A substrate-binding site is contributed by Glu-83. Substrate-binding positions include 105–108, 207–209, Gln-226, and Asp-233; these read IDGT and GSS. Asp-233 is a Mg(2+) binding site.

Belongs to the inositol monophosphatase superfamily. As to quaternary structure, homodimer. The cofactor is Mg(2+).

Its subcellular location is the cytoplasm. It catalyses the reaction a myo-inositol phosphate + H2O = myo-inositol + phosphate. It functions in the pathway polyol metabolism; myo-inositol biosynthesis; myo-inositol from D-glucose 6-phosphate: step 2/2. In terms of biological role, can use myo-inositol monophosphates, scylloinositol 1,4-diphosphate, glucose-1-phosphate, beta-glycerophosphate, and 2'-AMP as substrates. Has been implicated as the pharmacological target for lithium Li(+) action in brain. This chain is Inositol monophosphatase 2 (Impa2), found in Rattus norvegicus (Rat).